A 378-amino-acid chain; its full sequence is DNA replication and repair protein RecF (378 aa).

31-38 (GENGSGKT) contributes to the ATP binding site.

The protein belongs to the RecF family.

The protein resides in the cytoplasm. In terms of biological role, the RecF protein is involved in DNA metabolism; it is required for DNA replication and normal SOS inducibility. RecF binds preferentially to single-stranded, linear DNA. It also seems to bind ATP. This Teredinibacter turnerae (strain ATCC 39867 / T7901) protein is DNA replication and repair protein RecF.